The following is a 156-amino-acid chain: MFLSTFEKQLDSKRRIVVPQEFRAAVSGPFDGIFCFPSIEADCLEAGGKALFDRYQAVIEEMPFGDPTRTALETSILGGMAKLTFDTAGRITLPDHLCDMFGLTDSVAVVGMGERFQIWSREAFQAHRAQQRDLAREGLAALRAQQRAAKFAGGAA.

SpoVT-AbrB domains lie at 5–51 and 80–123; these read TFEK…GKAL and MAKL…SREA.

The protein belongs to the MraZ family. As to quaternary structure, forms oligomers.

It localises to the cytoplasm. The protein resides in the nucleoid. This chain is Transcriptional regulator MraZ, found in Caulobacter vibrioides (strain ATCC 19089 / CIP 103742 / CB 15) (Caulobacter crescentus).